The following is a 310-amino-acid chain: Homoserine kinase (310 aa).

91–101 (PIGSGLGSSAC) serves as a coordination point for ATP.

The protein belongs to the GHMP kinase family. Homoserine kinase subfamily.

It localises to the cytoplasm. The enzyme catalyses L-homoserine + ATP = O-phospho-L-homoserine + ADP + H(+). It functions in the pathway amino-acid biosynthesis; L-threonine biosynthesis; L-threonine from L-aspartate: step 4/5. Catalyzes the ATP-dependent phosphorylation of L-homoserine to L-homoserine phosphate. In Escherichia coli O17:K52:H18 (strain UMN026 / ExPEC), this protein is Homoserine kinase.